A 387-amino-acid polypeptide reads, in one-letter code: MRKKILLLGSGELGKEFTIAAQRLGQEIIAVDAYDGAPAQQVAHAREVVSMLDGAALDALVAKHRPDVIVPEIEAIRTERLQAYEAQGVQVVPSARAAAFTMNRRAIRDLAARELGLATARYAYASTPEAFRAAVHEIGLPCVVKPLMSSSGKGQSVVRAEGDLEAAWAYAMSGTRGDLREVIVEEFIPFDSEITLLTVTQRRGETLFCPPIGHRQERGDYQESWQPHPVPPPLLEEARRMAGAVTRALGGAGIFGVEFFLAKDRIWFSELSPRPHDTGMVTLAGTQPLNEFELHLRAVLGLPIPPITLVRPGASAVILARGTGAPVVRGLESALAEPGADVRIFGKPALRPHRRMGVALVSGAPGDDPRALVERARAVAARVSVDP.

Residues 12 to 13 (EL) and E72 contribute to the N(1)-(5-phospho-beta-D-ribosyl)glycinamide site. ATP is bound by residues R104, K145, 150–155 (SSGKGQ), 185–188 (EEFI), and E193. The region spanning 109-300 (DLAARELGLA…EFELHLRAVL (192 aa)) is the ATP-grasp domain. 2 residues coordinate Mg(2+): E258 and E270. N(1)-(5-phospho-beta-D-ribosyl)glycinamide-binding positions include D277, K347, and 354–355 (RR).

Belongs to the PurK/PurT family. Homodimer.

It carries out the reaction N(1)-(5-phospho-beta-D-ribosyl)glycinamide + formate + ATP = N(2)-formyl-N(1)-(5-phospho-beta-D-ribosyl)glycinamide + ADP + phosphate + H(+). Its pathway is purine metabolism; IMP biosynthesis via de novo pathway; N(2)-formyl-N(1)-(5-phospho-D-ribosyl)glycinamide from N(1)-(5-phospho-D-ribosyl)glycinamide (formate route): step 1/1. In terms of biological role, involved in the de novo purine biosynthesis. Catalyzes the transfer of formate to 5-phospho-ribosyl-glycinamide (GAR), producing 5-phospho-ribosyl-N-formylglycinamide (FGAR). Formate is provided by PurU via hydrolysis of 10-formyl-tetrahydrofolate. The protein is Formate-dependent phosphoribosylglycinamide formyltransferase of Anaeromyxobacter dehalogenans (strain 2CP-C).